A 153-amino-acid polypeptide reads, in one-letter code: Ribonuclease VapC6 (153 aa).

The PINc domain occupies 6–152 (VFIDSSVMVG…EKVDFIEIIK (147 aa)). Residues D9 and D120 each contribute to the Mg(2+) site.

This sequence belongs to the PINc/VapC protein family. It depends on Mg(2+) as a cofactor.

Functionally, toxic component of a type II toxin-antitoxin (TA) system. An RNase. The polypeptide is Ribonuclease VapC6 (Methanocaldococcus jannaschii (strain ATCC 43067 / DSM 2661 / JAL-1 / JCM 10045 / NBRC 100440) (Methanococcus jannaschii)).